A 146-amino-acid chain; its full sequence is Hemoglobin subunit beta (146 aa).

Residue Val1 is modified to N-acetylvaline. A Globin domain is found at 2 to 146; the sequence is HLTAEEKSAV…VANALAHKYH (145 aa). Thr12 carries the phosphothreonine modification. Residue Ser44 is modified to Phosphoserine. Lys59 carries the post-translational modification N6-acetyllysine. His63 contributes to the heme b binding site. Lys82 is modified (N6-acetyllysine). His92 is a binding site for heme b. Cys93 carries the S-nitrosocysteine modification. N6-acetyllysine is present on Lys144.

Belongs to the globin family. In terms of assembly, heterotetramer of two alpha chains and two beta chains. In terms of tissue distribution, red blood cells.

In terms of biological role, involved in oxygen transport from the lung to the various peripheral tissues. The chain is Hemoglobin subunit beta (HBB) from Meles meles (Eurasian badger).